Consider the following 548-residue polypeptide: Kinetochore and Eb1-associated basic protein (548 aa).

Disordered regions lie at residues 1–51 and 82–181; these read MSSM…PKHP and YRSS…IRPK. 3 stretches are compositionally biased toward basic and acidic residues: residues 20-29, 104-116, and 127-141; these read RTKELLERQR, RTWE…EFRS, and PRPR…DLRS. The important for kinetochore and microtubule localization stretch occupies residues 100–253; the sequence is QNRQRTWEGP…TTSKRKLDFK (154 aa). Residues 144–155 show a composition bias toward polar residues; it reads QGTPATKIPSQR. Residues 149 to 152 carry the SXIP motif 1 motif; sequence TKIP. The span at 156-165 shows a compositional bias: basic and acidic residues; the sequence is NPKENQELSK. Residues 166–175 show a composition bias toward polar residues; that stretch reads SHTCIPSSEP. The short motif at 168–171 is the SXIP motif 2 element; the sequence is TCIP. Residues 237–372 form a CH (calponin-homology)-like region, which is not required for kinetochore and microtubule localization region; it reads SDKGIKLTTS…MCALPVVSEK (136 aa). Residues 386–457 are a coiled coil; that stretch reads YDVMSLQQKF…LQLQRLRLQE (72 aa).

In terms of assembly, interacts with Eb1 via the two SxIP motifs; the interaction is not required for kebab kinetochore localization.

It localises to the cytoplasm. The protein localises to the perinuclear region. Its subcellular location is the chromosome. The protein resides in the centromere. It is found in the kinetochore. It localises to the cytoskeleton. The protein localises to the spindle. The sequence is that of Kinetochore and Eb1-associated basic protein from Drosophila melanogaster (Fruit fly).